The following is a 398-amino-acid chain: uncharacterized protein (398 aa).

A run of 10 helical transmembrane segments spans residues 43–65 (PILPMLITSVGGGSLSIGLVGGL), 89–108 (IFVVLGYLTSSMFKLLLGLS), 156–173 (TAGAILGSTLSLLFILYL), 180–198 (IILIAAVIGFLTLIPLYFV), 224–246 (LFILISAIFTLSNFSYMFYILRA), 259–281 (IIIPIALYILYNIFYATFSIPFG), 291–311 (SVLTIGYIVYGIVSLGFAYFI), 316–338 (LILLFALYGIAYALFAGNQKAYV), 351–373 (LGLFYTVVGLTSLPASLIAGYLW), and 380–397 (TFLYGSVLAIISGLLLLF).

Belongs to the major facilitator superfamily.

Its subcellular location is the cell membrane. This is an uncharacterized protein from Methanocaldococcus jannaschii (strain ATCC 43067 / DSM 2661 / JAL-1 / JCM 10045 / NBRC 100440) (Methanococcus jannaschii).